A 320-amino-acid chain; its full sequence is Cytochrome c biogenesis protein CcsA (320 aa).

The next 7 membrane-spanning stretches (helical) occupy residues 14–34 (VLLL…WCFW), 68–88 (GHFP…ACTL), 101–121 (LVAA…SFAL), 146–166 (VIMV…AVLM), 226–246 (TITV…VWAN), 260–277 (TWAL…HTRL), and 289–309 (VASL…LLGI).

The protein belongs to the CcmF/CycK/Ccl1/NrfE/CcsA family. May interact with ccs1.

The protein resides in the cellular thylakoid membrane. Functionally, required during biogenesis of c-type cytochromes (cytochrome c6 and cytochrome f) at the step of heme attachment. This chain is Cytochrome c biogenesis protein CcsA, found in Synechococcus sp. (strain WH7803).